A 228-amino-acid chain; its full sequence is tRNA (guanine-N(1)-)-methyltransferase (228 aa).

S-adenosyl-L-methionine-binding positions include Gly-108 and 127-132; that span reads VGDFIL.

This sequence belongs to the RNA methyltransferase TrmD family. Homodimer.

It localises to the cytoplasm. It carries out the reaction guanosine(37) in tRNA + S-adenosyl-L-methionine = N(1)-methylguanosine(37) in tRNA + S-adenosyl-L-homocysteine + H(+). Functionally, specifically methylates guanosine-37 in various tRNAs. This is tRNA (guanine-N(1)-)-methyltransferase from Metamycoplasma arthritidis (strain 158L3-1) (Mycoplasma arthritidis).